A 281-amino-acid polypeptide reads, in one-letter code: LIM domain-containing protein G (281 aa).

LIM zinc-binding domains lie at leucine 40–asparagine 101, aspartate 141–valine 205, and asparagine 206–proline 262.

This Dictyostelium discoideum (Social amoeba) protein is LIM domain-containing protein G (limG).